We begin with the raw amino-acid sequence, 365 residues long: Phosphate acyltransferase (365 aa).

The protein belongs to the PlsX family. In terms of assembly, homodimer. Probably interacts with PlsY.

It localises to the cytoplasm. The enzyme catalyses a fatty acyl-[ACP] + phosphate = an acyl phosphate + holo-[ACP]. It functions in the pathway lipid metabolism; phospholipid metabolism. Its function is as follows. Catalyzes the reversible formation of acyl-phosphate (acyl-PO(4)) from acyl-[acyl-carrier-protein] (acyl-ACP). This enzyme utilizes acyl-ACP as fatty acyl donor, but not acyl-CoA. The protein is Phosphate acyltransferase of Klebsiella pneumoniae (strain 342).